The following is a 258-amino-acid chain: Imidazole glycerol phosphate synthase subunit HisF (258 aa).

Active-site residues include aspartate 11 and aspartate 130.

It belongs to the HisA/HisF family. Heterodimer of HisH and HisF.

It localises to the cytoplasm. It catalyses the reaction 5-[(5-phospho-1-deoxy-D-ribulos-1-ylimino)methylamino]-1-(5-phospho-beta-D-ribosyl)imidazole-4-carboxamide + L-glutamine = D-erythro-1-(imidazol-4-yl)glycerol 3-phosphate + 5-amino-1-(5-phospho-beta-D-ribosyl)imidazole-4-carboxamide + L-glutamate + H(+). Its pathway is amino-acid biosynthesis; L-histidine biosynthesis; L-histidine from 5-phospho-alpha-D-ribose 1-diphosphate: step 5/9. Its function is as follows. IGPS catalyzes the conversion of PRFAR and glutamine to IGP, AICAR and glutamate. The HisF subunit catalyzes the cyclization activity that produces IGP and AICAR from PRFAR using the ammonia provided by the HisH subunit. The polypeptide is Imidazole glycerol phosphate synthase subunit HisF (Shigella sonnei (strain Ss046)).